The sequence spans 154 residues: Putative esterase AF_2264 (154 aa).

It belongs to the thioesterase PaaI family.

The polypeptide is Putative esterase AF_2264 (Archaeoglobus fulgidus (strain ATCC 49558 / DSM 4304 / JCM 9628 / NBRC 100126 / VC-16)).